The primary structure comprises 212 residues: Thymidylate kinase (212 aa).

11–18 is an ATP binding site; the sequence is GPEGAGKT.

This sequence belongs to the thymidylate kinase family.

It carries out the reaction dTMP + ATP = dTDP + ADP. Its function is as follows. Phosphorylation of dTMP to form dTDP in both de novo and salvage pathways of dTTP synthesis. The sequence is that of Thymidylate kinase from Streptococcus pneumoniae serotype 2 (strain D39 / NCTC 7466).